The chain runs to 178 residues: Inner membrane-spanning protein YciB (178 aa).

The next 5 helical transmembrane spans lie at 10–30 (IVLF…AVLM), 47–67 (LQTM…LTLA), 76–96 (WKPT…LWAL), 121–141 (WAWI…VLHW), and 151–171 (LWGY…IAPH).

Belongs to the YciB family.

It is found in the cell inner membrane. Plays a role in cell envelope biogenesis, maintenance of cell envelope integrity and membrane homeostasis. The protein is Inner membrane-spanning protein YciB of Verminephrobacter eiseniae (strain EF01-2).